Reading from the N-terminus, the 210-residue chain is Small ribosomal subunit protein uS4 (210 aa).

The region spanning 100 to 160 (GRLDNVVYRM…EKSKNQLRVK (61 aa)) is the S4 RNA-binding domain.

The protein belongs to the universal ribosomal protein uS4 family. Part of the 30S ribosomal subunit. Contacts protein S5. The interaction surface between S4 and S5 is involved in control of translational fidelity.

In terms of biological role, one of the primary rRNA binding proteins, it binds directly to 16S rRNA where it nucleates assembly of the body of the 30S subunit. With S5 and S12 plays an important role in translational accuracy. In Alcanivorax borkumensis (strain ATCC 700651 / DSM 11573 / NCIMB 13689 / SK2), this protein is Small ribosomal subunit protein uS4.